The following is a 203-amino-acid chain: Suppressor of RNA silencing p3 (203 aa).

This sequence belongs to the tenuiviruses p3 protein family. In terms of assembly, homodimer.

Its subcellular location is the host cytoplasm. In terms of biological role, acts as a suppressor of RNA-mediated gene silencing, also known as post-transcriptional gene silencing (PTGS), presumably through the binding of dsRNA. The chain is Suppressor of RNA silencing p3 from Oryza sativa (Rice).